The following is a 95-amino-acid chain: Co-chaperonin GroES (95 aa).

This sequence belongs to the GroES chaperonin family. As to quaternary structure, heptamer of 7 subunits arranged in a ring. Interacts with the chaperonin GroEL.

It is found in the cytoplasm. Functionally, together with the chaperonin GroEL, plays an essential role in assisting protein folding. The GroEL-GroES system forms a nano-cage that allows encapsulation of the non-native substrate proteins and provides a physical environment optimized to promote and accelerate protein folding. GroES binds to the apical surface of the GroEL ring, thereby capping the opening of the GroEL channel. The chain is Co-chaperonin GroES from Cereibacter sphaeroides (strain ATCC 17025 / ATH 2.4.3) (Rhodobacter sphaeroides).